Here is a 37-residue protein sequence, read N- to C-terminus: Protein YnaM (37 aa).

Residues 4–24 (ILIITSLLIIFSIFSHALIKL) traverse the membrane as a helical segment.

It localises to the cell inner membrane. This chain is Protein YnaM, found in Escherichia coli (strain K12).